We begin with the raw amino-acid sequence, 357 residues long: Quinolinate synthase (357 aa).

Positions 50 and 71 each coordinate iminosuccinate. Cysteine 116 is a [4Fe-4S] cluster binding site. Iminosuccinate is bound by residues 142-144 and serine 159; that span reads YAN. Cysteine 203 contacts [4Fe-4S] cluster. Residues 229–231 and threonine 246 each bind iminosuccinate; that span reads HPE. Cysteine 300 lines the [4Fe-4S] cluster pocket.

This sequence belongs to the quinolinate synthase family. Type 1 subfamily. Requires [4Fe-4S] cluster as cofactor.

It localises to the cytoplasm. The enzyme catalyses iminosuccinate + dihydroxyacetone phosphate = quinolinate + phosphate + 2 H2O + H(+). Its pathway is cofactor biosynthesis; NAD(+) biosynthesis; quinolinate from iminoaspartate: step 1/1. Its function is as follows. Catalyzes the condensation of iminoaspartate with dihydroxyacetone phosphate to form quinolinate. The chain is Quinolinate synthase from Shewanella sp. (strain MR-4).